The chain runs to 433 residues: L-2-hydroxyglutarate dehydrogenase, mitochondrial (433 aa).

This sequence belongs to the L2HGDH family. Requires FAD as cofactor.

It localises to the mitochondrion. The catalysed reaction is (S)-2-hydroxyglutarate + A = 2-oxoglutarate + AH2. The protein is L-2-hydroxyglutarate dehydrogenase, mitochondrial of Caenorhabditis elegans.